The following is a 396-amino-acid chain: Putative protein IntB (396 aa).

Residues 71 to 151 (RTFKEVAIEW…RTTAIMRYAV (81 aa)) enclose the Core-binding (CB) domain. Positions 174-367 (QHRPALELKR…EHLEERRLML (194 aa)) constitute a Tyr recombinase domain. Active-site residues include arginine 213, lysine 252, histidine 316, arginine 319, and histidine 343. Tyrosine 353 serves as the catalytic O-(3'-phospho-DNA)-tyrosine intermediate.

Belongs to the 'phage' integrase family.

This Escherichia coli (strain K12) protein is Putative protein IntB (intB).